Reading from the N-terminus, the 355-residue chain is MSYQEAWNPVDSSLDEIISIAASLKSKTGAVKEIFSQELTQREANVKKVHENLEELQKKLDHTSFAHKEDRDRLEAQIAQKEQEQKAKLAEYDQKVQNEFDARERAEREREAARGDAAAEKQRLASLLKDLEDDASGYNRLRPSKPMLSEEDTNILRQLFLSSAVSGSGKFSFQDLKQVLAKYADTIPEGPLKKLFVMVENDTKGRMSYITLVAVANDLAALVADFRKIDTNSNGTLSRKEFREHFVRLGFDKKSVQDALFRYADEDESDDVGFSEYVHLGLCLLVLRILYAFADFDKSGQLSKEEVQKVLEDAHIPESARKKFEHQFSVVDVDDSKSLSYQEFVMLVLLMFHDD.

EF-hand domains follow at residues 151–186 (EDTNILRQLFLSSAVSGSGKFSFQDLKQVLAKYADT) and 217–252 (NDLAALVADFRKIDTNSNGTLSRKEFREHFVRLGFD). Residues Asp-230, Asn-232, Asn-234, Thr-236, Glu-241, Asp-265, Asp-267, Ser-269, Asp-271, Glu-276, Asp-295, Asp-297, Ser-299, Gln-301, Glu-306, Asp-332, Asp-334, Ser-336, Ser-338, and Glu-343 each coordinate Ca(2+). 2 EF-hand domains span residues 282–317 (LCLLVLRILYAFADFDKSGQLSKEEVQKVLEDAHIP) and 319–354 (SARKKFEHQFSVVDVDDSKSLSYQEFVMLVLLMFHD).

The polypeptide is Plasmodial-specific protein LAV1-2 (Physarum polycephalum (Slime mold)).